The primary structure comprises 208 residues: Outer-membrane lipoprotein carrier protein (208 aa).

A signal peptide spans 1–23 (MKKTVKNLTALLTLALAAPWALA).

The protein belongs to the LolA family. In terms of assembly, monomer.

It localises to the periplasm. In terms of biological role, participates in the translocation of lipoproteins from the inner membrane to the outer membrane. Only forms a complex with a lipoprotein if the residue after the N-terminal Cys is not an aspartate (The Asp acts as a targeting signal to indicate that the lipoprotein should stay in the inner membrane). This Actinobacillus succinogenes (strain ATCC 55618 / DSM 22257 / CCUG 43843 / 130Z) protein is Outer-membrane lipoprotein carrier protein.